A 518-amino-acid chain; its full sequence is NADH-quinone oxidoreductase subunit N (518 aa).

A run of 14 helical transmembrane segments spans residues 18–38 (FRPEMALTFGTLVLFVLDLVF), 45–65 (VALLTAGALAVLAAAAGLLAI), 82–102 (AFAIFFKWLFLAAGALTVIIA), 113–133 (IGQFFALLMAIVLGMFMMASA), 136–156 (LLMVYLSLELVSMVSYVLAGF), 171–191 (VIYGGVASGVMLFGMSYLYGL), 220–240 (VALVVAIVFVTAGIGYKVAAV), 254–274 (PTPFTAFLSVGPKAAGFALAI), 295–315 (LAGIPWPAVVGVIAAVTMTLG), 328–348 (LLAYSSIAHAGYTLMGLSAVS), 355–375 (VMIYMLVYLVMNVGAFLVVIL), 399–419 (AVAFAIFLFSLTGLPPFAGFV), 439–459 (WYAWLALIGALNTAIALYYYV), and 486–506 (VMLGAFSVAILVFGIWWTPMV).

Belongs to the complex I subunit 2 family. In terms of assembly, NDH-1 is composed of 14 different subunits. Subunits NuoA, H, J, K, L, M, N constitute the membrane sector of the complex.

It localises to the cell inner membrane. The catalysed reaction is a quinone + NADH + 5 H(+)(in) = a quinol + NAD(+) + 4 H(+)(out). Its function is as follows. NDH-1 shuttles electrons from NADH, via FMN and iron-sulfur (Fe-S) centers, to quinones in the respiratory chain. The immediate electron acceptor for the enzyme in this species is believed to be ubiquinone. Couples the redox reaction to proton translocation (for every two electrons transferred, four hydrogen ions are translocated across the cytoplasmic membrane), and thus conserves the redox energy in a proton gradient. In Anaeromyxobacter sp. (strain Fw109-5), this protein is NADH-quinone oxidoreductase subunit N.